Reading from the N-terminus, the 284-residue chain is Diaminopimelate epimerase (284 aa).

Residues asparagine 21, glutamine 54, and asparagine 74 each coordinate substrate. The Proton donor role is filled by cysteine 83. Substrate contacts are provided by residues 84-85 (GN), asparagine 167, asparagine 200, and 218-219 (ER). Catalysis depends on cysteine 227, which acts as the Proton acceptor. 228–229 (GS) contributes to the substrate binding site.

This sequence belongs to the diaminopimelate epimerase family. In terms of assembly, homodimer.

It localises to the cytoplasm. It catalyses the reaction (2S,6S)-2,6-diaminopimelate = meso-2,6-diaminopimelate. It participates in amino-acid biosynthesis; L-lysine biosynthesis via DAP pathway; DL-2,6-diaminopimelate from LL-2,6-diaminopimelate: step 1/1. Functionally, catalyzes the stereoinversion of LL-2,6-diaminopimelate (L,L-DAP) to meso-diaminopimelate (meso-DAP), a precursor of L-lysine and an essential component of the bacterial peptidoglycan. In Buchnera aphidicola subsp. Acyrthosiphon pisum (strain 5A), this protein is Diaminopimelate epimerase.